The primary structure comprises 210 residues: Probable HTH-type transcriptional regulator ArpR (210 aa).

One can recognise an HTH tetR-type domain in the interval 10–70 (QETRAQIIEA…ALLDSLHETH (61 aa)). The segment at residues 33 to 52 (TLADIAELAGVTRGAIYWHF) is a DNA-binding region (H-T-H motif).

Its function is as follows. Probable regulatory protein for the antibiotic efflux pump arpABC operon. May function as a repressor. This chain is Probable HTH-type transcriptional regulator ArpR (arpR), found in Pseudomonas putida (Arthrobacter siderocapsulatus).